We begin with the raw amino-acid sequence, 129 residues long: Transcription antitermination protein NusB (129 aa).

This sequence belongs to the NusB family.

Its function is as follows. Involved in transcription antitermination. Required for transcription of ribosomal RNA (rRNA) genes. Binds specifically to the boxA antiterminator sequence of the ribosomal RNA (rrn) operons. The protein is Transcription antitermination protein NusB of Staphylococcus aureus (strain USA300 / TCH1516).